The sequence spans 819 residues: Leucine--tRNA ligase (819 aa).

The short motif at 40–51 (PYPSGAGLHVGH) is the 'HIGH' region element. Residues 600–604 (KMSKS) carry the 'KMSKS' region motif. Lysine 603 serves as a coordination point for ATP.

It belongs to the class-I aminoacyl-tRNA synthetase family.

Its subcellular location is the cytoplasm. The enzyme catalyses tRNA(Leu) + L-leucine + ATP = L-leucyl-tRNA(Leu) + AMP + diphosphate. In Chlamydia muridarum (strain MoPn / Nigg), this protein is Leucine--tRNA ligase.